The primary structure comprises 387 residues: Zinc finger protein neuro-d4 (387 aa).

Glycyl lysine isopeptide (Lys-Gly) (interchain with G-Cter in SUMO2) cross-links involve residues Lys-106, Lys-129, and Lys-133. A C2H2-type zinc finger spans residues 195 to 218 (YVCDICGKRYKNRPGLSYHYTHTH). 2 consecutive PHD-type zinc fingers follow at residues 271–328 (NGYC…CKSC) and 325–375 (CKSC…CLRH). Zn(2+)-binding residues include Cys-274, Cys-277, Cys-293, Cys-296, His-301, Cys-304, Cys-322, Cys-325, Cys-328, Cys-331, Cys-343, Cys-346, His-351, Cys-354, Cys-369, and Cys-372.

This sequence belongs to the requiem/DPF family. As to quaternary structure, component of neuron-specific chromatin remodeling complex (nBAF complex) composed of at least, ARID1A/BAF250A or ARID1B/BAF250B, SMARCD1/BAF60A, SMARCD3/BAF60C, SMARCA2/BRM/BAF190B, SMARCA4/BRG1/BAF190A, SMARCB1/BAF47, SMARCC1/BAF155, SMARCE1/BAF57, SMARCC2/BAF170, DPF1/BAF45B, DPF3/BAF45C, ACTL6B/BAF53B and actin.

The protein localises to the cytoplasm. Its subcellular location is the nucleus. May have an important role in developing neurons by participating in regulation of cell survival, possibly as a neurospecific transcription factor. Belongs to the neuron-specific chromatin remodeling complex (nBAF complex). During neural development a switch from a stem/progenitor to a postmitotic chromatin remodeling mechanism occurs as neurons exit the cell cycle and become committed to their adult state. The transition from proliferating neural stem/progenitor cells to postmitotic neurons requires a switch in subunit composition of the npBAF and nBAF complexes. As neural progenitors exit mitosis and differentiate into neurons, npBAF complexes which contain ACTL6A/BAF53A and PHF10/BAF45A, are exchanged for homologous alternative ACTL6B/BAF53B and DPF1/BAF45B or DPF3/BAF45C subunits in neuron-specific complexes (nBAF). The npBAF complex is essential for the self-renewal/proliferative capacity of the multipotent neural stem cells. The nBAF complex along with CREST plays a role regulating the activity of genes essential for dendrite growth. This Homo sapiens (Human) protein is Zinc finger protein neuro-d4.